Here is a 70-residue protein sequence, read N- to C-terminus: Kappa-scoloptoxin(07)-Ssm2b (70 aa).

Residues 1 to 19 (MLVFYALLFVSVFSSTVMG) form the signal peptide. The propeptide occupies 20–39 (ATIDKPILREAIEEIDVNKR).

Belongs to the scoloptoxin-07 family. Contains 3 disulfide bonds. As to expression, expressed by the venom gland.

Its subcellular location is the secreted. Its function is as follows. Inhibits voltage-gated potassium channels. The polypeptide is Kappa-scoloptoxin(07)-Ssm2b (Scolopendra mutilans (Chinese red-headed centipede)).